The chain runs to 784 residues: LPS-assembly protein LptD (784 aa).

Positions 1-24 (MKKRIPTLLATMIATALYSQQGLA) are cleaved as a signal peptide. 2 disulfide bridges follow: C31–C724 and C173–C725.

Belongs to the LptD family. As to quaternary structure, component of the lipopolysaccharide transport and assembly complex. Interacts with LptE and LptA. Post-translationally, contains two intramolecular disulfide bonds.

Its subcellular location is the cell outer membrane. Functionally, together with LptE, is involved in the assembly of lipopolysaccharide (LPS) at the surface of the outer membrane. The sequence is that of LPS-assembly protein LptD from Shigella dysenteriae serotype 1 (strain Sd197).